The sequence spans 62 residues: Large ribosomal subunit protein bL35 (62 aa).

Positions 31–62 (HLAQNKTTKQKRQSRKSAQMHSSDLKRFKALI) are disordered. Basic and acidic residues predominate over residues 53–62 (SDLKRFKALI).

Belongs to the bacterial ribosomal protein bL35 family.

The sequence is that of Large ribosomal subunit protein bL35 from Mycoplasmopsis agalactiae (strain NCTC 10123 / CIP 59.7 / PG2) (Mycoplasma agalactiae).